Reading from the N-terminus, the 494-residue chain is Tripartite motif-containing protein 5 (494 aa).

N-acetylalanine is present on A2. An RING-type zinc finger spans residues 15–59; it reads CPICLELLTEPLSLDCGHSFCQACITANHKKSMLHQGERSCPLCR. Position 86 is a phosphoserine (S86). The segment at 91 to 132 adopts a B box-type zinc-finger fold; sequence QKVDHCARHGEKLLLFCQQDGNVICWLCERSQEHRGHHTLLV. Residues C96, H99, C118, and H124 each coordinate Zn(2+). The stretch at 132 to 222 forms a coiled coil; the sequence is VEEVAQTYRE…KRLTQSENDM (91 aa). The required for interaction with GABARAP and for autophagy stretch occupies residues 186–199; it reads FKQLRDILDCEESN. Residues 280–494 enclose the B30.2/SPRY domain; that stretch reads PDLKGMLQVF…LPMTLCSPRS (215 aa).

The protein belongs to the TRIM/RBCC family. Can form homodimers and homotrimers. In addition to lower-order dimerization, also exhibits a higher-order multimerization and both low- and high-order multimerizations are essential for its restriction activity. Interacts with BTBD1 and BTBD2. Interacts with PSMC4, PSMC5, PSMD7 and HSPA8/HSC70. Interacts (via B30.2/SPRY domain) with HSPA1A/B. Interacts with PSMC2, MAP3K7/TAK1, TAB2 and TAB3. Interacts with SQSTM1. Interacts with TRIM6 and TRIM34. Interacts with ULK1 (phosphorylated form), GABARAP, GABARAPL1, GABARAPL2, MAP1LC3A, MAP1LC3C and BECN1. Post-translationally, degraded in a proteasome-independent fashion in the absence of viral infection but in a proteasome-dependent fashion following exposure to restriction sensitive virus. In terms of processing, autoubiquitinated in a RING finger- and UBE2D2-dependent manner. Monoubiquitinated by TRIM21. Deubiquitinated by Yersinia YopJ. Ubiquitination may not lead to proteasomal degradation.

It is found in the cytoplasm. It localises to the nucleus. It carries out the reaction S-ubiquitinyl-[E2 ubiquitin-conjugating enzyme]-L-cysteine + [acceptor protein]-L-lysine = [E2 ubiquitin-conjugating enzyme]-L-cysteine + N(6)-ubiquitinyl-[acceptor protein]-L-lysine.. It participates in protein modification; protein ubiquitination. Its function is as follows. Capsid-specific restriction factor that prevents infection from non-host-adapted retroviruses. Blocks viral replication early in the life cycle, after viral entry but before reverse transcription. In addition to acting as a capsid-specific restriction factor, also acts as a pattern recognition receptor that activates innate immune signaling in response to the retroviral capsid lattice. Binding to the viral capsid triggers its E3 ubiquitin ligase activity, and in concert with the heterodimeric ubiquitin conjugating enzyme complex UBE2V1-UBE2N (also known as UBC13-UEV1A complex) generates 'Lys-63'-linked polyubiquitin chains, which in turn are catalysts in the autophosphorylation of the MAP3K7/TAK1 complex (includes TAK1, TAB2, and TAB3). Activation of the MAP3K7/TAK1 complex by autophosphorylation results in the induction and expression of NF-kappa-B and MAPK-responsive inflammatory genes, thereby leading to an innate immune response in the infected cell. Plays a role in regulating autophagy through activation of autophagy regulator BECN1 by causing its dissociation from its inhibitors BCL2 and TAB2. The sequence is that of Tripartite motif-containing protein 5 (TRIM5) from Pithecia pithecia (White-faced saki).